The following is a 1447-amino-acid chain: ATP-dependent helicase SGS1 (1447 aa).

Disordered regions lie at residues 37–78, 243–264, 342–430, 552–572, and 601–639; these read IANK…TATK, KKDG…QDDN, KEGA…EEKE, KENE…LSDS, and TERK…FDDD. Residues 59–78 show a composition bias toward polar residues; that stretch reads GTTNFITSIPASGPTNTATK. Positions 243–253 are enriched in basic and acidic residues; it reads KKDGMSKDQSK. Over residues 254-264 the composition is skewed to polar residues; it reads GRSQVSSQDDN. A compositionally biased stretch (basic and acidic residues) spans 363 to 386; the sequence is ELTRRRNMRSREPVNYRIPDRDDP. Composition is skewed to acidic residues over residues 403–415 and 552–561; these read EREE…EAED and KENEDFEEDN. A compositionally biased stretch (basic and acidic residues) spans 601 to 611; that stretch reads TERKLTGDNEH. The Helicase ATP-binding domain occupies 687 to 864; it reads VNATLQGKDV…IHNLELKEPV (178 aa). 714–721 provides a ligand contact to ATP; it reads AVVKSGKT. The DEAH box motif lies at 808 to 811; it reads DEAH. Residues 886–1035 enclose the Helicase C-terminal domain; sequence TIFEICDAVK…NKEKHLNKLQ (150 aa). Positions 1272–1351 constitute an HRDC domain; the sequence is LNNLRMTYER…ADLSKKRSSE (80 aa). A compositionally biased stretch (polar residues) spans 1402–1411; that stretch reads QIRQSQLPKN. The tract at residues 1402–1447 is disordered; that stretch reads QIRQSQLPKNTTSSKSGTRSISKSSKKSANGRRGFRNYRGHYRGRK. The span at 1412 to 1424 shows a compositional bias: low complexity; sequence TTSSKSGTRSISK. A compositionally biased stretch (basic residues) spans 1425–1447; that stretch reads SSKKSANGRRGFRNYRGHYRGRK.

The protein belongs to the helicase family. RecQ subfamily. In terms of assembly, heterodimer with TOP3. Forms a complex with TOP3 and RMI1. Forms a ternary complex with a MLH1-MLH3 heterodimer (MutLbeta) during meiosis. Interacts with TOP2. Requires Mg(2+) as cofactor.

The protein resides in the nucleus. Its subcellular location is the nucleolus. It carries out the reaction Couples ATP hydrolysis with the unwinding of duplex DNA by translocating in the 3'-5' direction.. The catalysed reaction is ATP + H2O = ADP + phosphate + H(+). Its activity is regulated as follows. Helicase activity on G-quadruplex DNA is inhibited by ATP-gamma-S. In terms of biological role, ATP-dependent 3'-5' DNA helicase able to unwind duplex DNA or DNA:RNA heteroduplex. Unwinds G-quadruplex DNA; unwinding occurs in the 3'-5' direction, requires a 3' single-stranded end of at least 7 nucleotides. Helicase activity is higher on G-quadruplex substrates than on duplex DNA substrates. Assayed with a catalytic fragment (residues 400-1268). Telomeres and rDNA are notably G-rich; formation of G-quadruplex DNA would block DNA replication and transcription. Acts as an integral component of the S-phase checkpoint response, which arrests cells due to DNA damage or blocked fork progression during DNA replication. Can create a deleterious topological substrate that TOP3 preferentially resolves. The TOP3-SGS1 protein complex may function as a eukaryotic reverse gyrase introducing positive supercoils into extrachromosomal ribosomal DNA rings. Together with topoisomerase II has a role in chromosomal segregation. Maintains rDNA structure where it has a role in re-starting stalled replication forks. This is ATP-dependent helicase SGS1 from Saccharomyces cerevisiae (strain ATCC 204508 / S288c) (Baker's yeast).